Reading from the N-terminus, the 186-residue chain is Lipoprotein signal peptidase (186 aa).

3 consecutive transmembrane segments (helical) span residues 11-31 (WIPLFAAGLVVVLDQCAKLLV), 44-64 (VLGDFVRIVHVYNVGAAFSIG), and 70-90 (VLRTLVLGIVPLIIMFLIVFS). Catalysis depends on residues aspartate 128 and aspartate 150. A helical transmembrane segment spans residues 145 to 165 (AFNIADAVIMTCGLLLIISFI).

Belongs to the peptidase A8 family.

It is found in the cell inner membrane. The catalysed reaction is Release of signal peptides from bacterial membrane prolipoproteins. Hydrolyzes -Xaa-Yaa-Zaa-|-(S,diacylglyceryl)Cys-, in which Xaa is hydrophobic (preferably Leu), and Yaa (Ala or Ser) and Zaa (Gly or Ala) have small, neutral side chains.. The protein operates within protein modification; lipoprotein biosynthesis (signal peptide cleavage). In terms of biological role, this protein specifically catalyzes the removal of signal peptides from prolipoproteins. This chain is Lipoprotein signal peptidase, found in Treponema pallidum (strain Nichols).